Reading from the N-terminus, the 258-residue chain is 1-(5-phosphoribosyl)-5-[(5-phosphoribosylamino)methylideneamino] imidazole-4-carboxamide isomerase (258 aa).

D17 acts as the Proton acceptor in catalysis. D136 acts as the Proton donor in catalysis.

The protein belongs to the HisA/HisF family.

Its subcellular location is the cytoplasm. It carries out the reaction 1-(5-phospho-beta-D-ribosyl)-5-[(5-phospho-beta-D-ribosylamino)methylideneamino]imidazole-4-carboxamide = 5-[(5-phospho-1-deoxy-D-ribulos-1-ylimino)methylamino]-1-(5-phospho-beta-D-ribosyl)imidazole-4-carboxamide. The protein operates within amino-acid biosynthesis; L-histidine biosynthesis; L-histidine from 5-phospho-alpha-D-ribose 1-diphosphate: step 4/9. In Corynebacterium jeikeium (strain K411), this protein is 1-(5-phosphoribosyl)-5-[(5-phosphoribosylamino)methylideneamino] imidazole-4-carboxamide isomerase.